Here is a 119-residue protein sequence, read N- to C-terminus: NADH-quinone oxidoreductase subunit A (119 aa).

3 helical membrane-spanning segments follow: residues 9 to 29 (VLLF…LGYV), 63 to 83 (LVAI…PWAV), and 88 to 108 (VGGA…VGFV).

It belongs to the complex I subunit 3 family. NDH-1 is composed of 14 different subunits. Subunits NuoA, H, J, K, L, M, N constitute the membrane sector of the complex.

The protein resides in the cell inner membrane. The enzyme catalyses a quinone + NADH + 5 H(+)(in) = a quinol + NAD(+) + 4 H(+)(out). Its function is as follows. NDH-1 shuttles electrons from NADH, via FMN and iron-sulfur (Fe-S) centers, to quinones in the respiratory chain. The immediate electron acceptor for the enzyme in this species is believed to be ubiquinone. Couples the redox reaction to proton translocation (for every two electrons transferred, four hydrogen ions are translocated across the cytoplasmic membrane), and thus conserves the redox energy in a proton gradient. The chain is NADH-quinone oxidoreductase subunit A from Delftia acidovorans (strain DSM 14801 / SPH-1).